The chain runs to 349 residues: Cytoplasmic tRNA 2-thiolation protein 2 (349 aa).

Belongs to the CTU2/NCS2 family.

The protein resides in the cytoplasm. It participates in tRNA modification; 5-methoxycarbonylmethyl-2-thiouridine-tRNA biosynthesis. Functionally, plays a central role in 2-thiolation of mcm(5)S(2)U at tRNA wobble positions of tRNA(Lys), tRNA(Glu) and tRNA(Gln). May act by forming a heterodimer with tut-1/ctu-1 that ligates sulfur from thiocarboxylated urm-1 onto the uridine of tRNAs at wobble position. The chain is Cytoplasmic tRNA 2-thiolation protein 2 from Caenorhabditis briggsae.